Here is a 3681-residue protein sequence, read N- to C-terminus: E3 ubiquitin-protein ligase UPL1 (3681 aa).

A compositionally biased stretch (basic and acidic residues) spans Asp-882–Ser-891. The segment at Asp-882–Asn-912 is disordered. Low complexity predominate over residues Asp-892–Thr-901. Residues Gln-1269 to Asn-1310 enclose the UBA domain. The UIM domain maps to Gln-1316–Thr-1335. 10 disordered regions span residues Ser-1332 to Pro-1358, Met-1768 to Ile-1802, Glu-2015 to Glu-2094, Glu-2125 to Asp-2151, Arg-2253 to Val-2287, Asn-2401 to Glu-2435, Pro-2483 to Pro-2505, Ile-2537 to Val-2606, Ser-2975 to Ser-3003, and Thr-3228 to Gly-3254. Basic and acidic residues-rich tracts occupy residues Pro-1336–Val-1345, Lys-1782–Ile-1802, and Leu-2017–His-2037. A compositionally biased stretch (polar residues) spans Gly-2038–Met-2087. Residues Asp-2130–Asp-2151 are compositionally biased toward acidic residues. Residues Arg-2253–Ser-2265 are compositionally biased toward basic and acidic residues. A compositionally biased stretch (polar residues) spans Arg-2277–Val-2287. Ser-2598 bears the Phosphoserine mark. Residues Glu-2982–Glu-3002 are compositionally biased toward basic and acidic residues. Positions Ala-3237–Asp-3247 are enriched in polar residues. In terms of domain architecture, HECT spans Ser-3340–Ala-3681. Cys-3648 functions as the Glycyl thioester intermediate in the catalytic mechanism.

Belongs to the UPL family. TOM1/PTR1 subfamily. As to expression, widely expressed. Expressed in root, stem, cauline and rosette leaf, seedling and flower (at protein level).

It catalyses the reaction S-ubiquitinyl-[E2 ubiquitin-conjugating enzyme]-L-cysteine + [acceptor protein]-L-lysine = [E2 ubiquitin-conjugating enzyme]-L-cysteine + N(6)-ubiquitinyl-[acceptor protein]-L-lysine.. It participates in protein modification; protein ubiquitination. Probable E3 ubiquitin-protein ligase which mediates ubiquitination and subsequent proteasomal degradation of target proteins. In Arabidopsis thaliana (Mouse-ear cress), this protein is E3 ubiquitin-protein ligase UPL1 (UPL1).